The sequence spans 350 residues: tRNA uridine(34) hydroxylase (350 aa).

The Rhodanese domain maps to 146–240 (DDPDALFIDM…YARKAREQGL (95 aa)). Residue Cys200 is the Cysteine persulfide intermediate of the active site.

This sequence belongs to the TrhO family.

The enzyme catalyses uridine(34) in tRNA + AH2 + O2 = 5-hydroxyuridine(34) in tRNA + A + H2O. In terms of biological role, catalyzes oxygen-dependent 5-hydroxyuridine (ho5U) modification at position 34 in tRNAs. The sequence is that of tRNA uridine(34) hydroxylase from Shigella dysenteriae serotype 1 (strain Sd197).